Consider the following 310-residue polypeptide: Porphobilinogen deaminase (310 aa).

Position 243 is an S-(dipyrrolylmethanemethyl)cysteine (C243).

This sequence belongs to the HMBS family. In terms of assembly, monomer. Requires dipyrromethane as cofactor.

The catalysed reaction is 4 porphobilinogen + H2O = hydroxymethylbilane + 4 NH4(+). The protein operates within porphyrin-containing compound metabolism; protoporphyrin-IX biosynthesis; coproporphyrinogen-III from 5-aminolevulinate: step 2/4. In terms of biological role, tetrapolymerization of the monopyrrole PBG into the hydroxymethylbilane pre-uroporphyrinogen in several discrete steps. The sequence is that of Porphobilinogen deaminase from Mannheimia succiniciproducens (strain KCTC 0769BP / MBEL55E).